A 58-amino-acid chain; its full sequence is Potassium channel toxin alpha-KTx 26.2 (58 aa).

The N-terminal stretch at 1–19 (MKTIFVVILVLFVLSAMLA) is a signal peptide. 3 disulfide bridges follow: cysteine 31/cysteine 49, cysteine 35/cysteine 54, and cysteine 39/cysteine 56.

The protein belongs to the short scorpion toxin superfamily. Potassium channel inhibitor family. Alpha-KTx 26 subfamily. In terms of tissue distribution, expressed by the venom gland.

It is found in the secreted. In terms of biological role, inhibits voltage-gated potassium channels. The sequence is that of Potassium channel toxin alpha-KTx 26.2 from Lychas mucronatus (Chinese swimming scorpion).